The chain runs to 231 residues: UPF0758 protein pc1765 (231 aa).

The MPN domain occupies 107-229; sequence LIEHSSHAYQ…YVSFKDQNLL (123 aa). Residues histidine 178, histidine 180, and aspartate 191 each coordinate Zn(2+). The short motif at 178 to 191 is the JAMM motif element; it reads HNHPSGDPMPSNQD.

Belongs to the UPF0758 family.

The protein is UPF0758 protein pc1765 of Protochlamydia amoebophila (strain UWE25).